Consider the following 122-residue polypeptide: Large ribosomal subunit protein uL14c (122 aa).

Belongs to the universal ribosomal protein uL14 family. Part of the 50S ribosomal subunit.

The protein localises to the plastid. The protein resides in the chloroplast. Its function is as follows. Binds to 23S rRNA. In Mesostigma viride (Green alga), this protein is Large ribosomal subunit protein uL14c.